The primary structure comprises 270 residues: Ribonuclease HII (270 aa).

Residues arginine 84–leucine 270 enclose the RNase H type-2 domain. A divalent metal cation-binding residues include aspartate 90, glutamate 91, and aspartate 186.

This sequence belongs to the RNase HII family. Mn(2+) is required as a cofactor. The cofactor is Mg(2+).

It is found in the cytoplasm. It catalyses the reaction Endonucleolytic cleavage to 5'-phosphomonoester.. Functionally, endonuclease that specifically degrades the RNA of RNA-DNA hybrids. In Clostridium beijerinckii (strain ATCC 51743 / NCIMB 8052) (Clostridium acetobutylicum), this protein is Ribonuclease HII.